The sequence spans 356 residues: Histidinol-phosphate aminotransferase (356 aa).

The residue at position 214 (Lys214) is an N6-(pyridoxal phosphate)lysine.

It belongs to the class-II pyridoxal-phosphate-dependent aminotransferase family. Histidinol-phosphate aminotransferase subfamily. As to quaternary structure, homodimer. Requires pyridoxal 5'-phosphate as cofactor.

It catalyses the reaction L-histidinol phosphate + 2-oxoglutarate = 3-(imidazol-4-yl)-2-oxopropyl phosphate + L-glutamate. It participates in amino-acid biosynthesis; L-histidine biosynthesis; L-histidine from 5-phospho-alpha-D-ribose 1-diphosphate: step 7/9. The chain is Histidinol-phosphate aminotransferase from Shigella boydii serotype 18 (strain CDC 3083-94 / BS512).